A 209-amino-acid chain; its full sequence is Heat shock protein beta-1 (209 aa).

Arg12 carries the omega-N-methylarginine modification. Ser13 carries the post-translational modification Phosphoserine. Residue Ser15 is modified to Phosphoserine; by MAPKAPK2 and MAPKAPK3. At Ser27 the chain carries Phosphoserine. The interaction with TGFB1I1 stretch occupies residues 74 to 209 (APAYSRALSR…AGKSEQSGAK (136 aa)). The region spanning 80–188 (ALSRQLSSGV…QSAEITIPVT (109 aa)) is the sHSP domain. Ser82 and Ser86 each carry phosphoserine; by MAPKAPK2, MAPKAPK3 and MAPKAPK5. Ser87, Ser90, and Ser102 each carry phosphoserine. An N6-acetyllysine modification is found at Lys127. The residue at position 178 (Thr178) is a Phosphothreonine. Phosphoserine is present on residues Ser180 and Ser203.

Belongs to the small heat shock protein (HSP20) family. In terms of assembly, homooligomer. Homodimer; becomes monomeric upon activation. Heterooligomer; with HSPB6. Associates with alpha- and beta-tubulin. Interacts with TGFB1I1. Interacts with CRYAB. Interacts with HSPB8. Interacts with HSPBAP1. Post-translationally, phosphorylated upon exposure to protein kinase C activators and heat shock. Phosphorylation by MAPKAPK2 and MAPKAPK3 in response to stress dissociates HSPB1 from large small heat-shock protein (sHsps) oligomers and impairs its chaperone activity and ability to protect against oxidative stress effectively. Phosphorylation by MAPKAPK5 in response to PKA stimulation induces F-actin rearrangement.

The protein resides in the cytoplasm. It is found in the nucleus. It localises to the cytoskeleton. The protein localises to the spindle. Small heat shock protein which functions as a molecular chaperone probably maintaining denatured proteins in a folding-competent state. Plays a role in stress resistance and actin organization. Through its molecular chaperone activity may regulate numerous biological processes including the phosphorylation and the axonal transport of neurofilament proteins. This is Heat shock protein beta-1 (HSPB1) from Canis lupus familiaris (Dog).